A 1229-amino-acid polypeptide reads, in one-letter code: Putative cell division cycle ATPase (1229 aa).

Over residues 252–267 the composition is skewed to low complexity; that stretch reads GKKNNNGNVKKGIKNV. Residues 252-315 form a disordered region; it reads GKKNNNGNVK…GGKNNSYYNE (64 aa). Positions 268 to 281 are enriched in basic and acidic residues; the sequence is PMDEKSYSPNDHDN. Low complexity predominate over residues 282 to 314; the sequence is NSNNSNNNNNNDNNNSNNNNNNNNGGKNNSYYN. 568–575 serves as a coordination point for ATP; it reads GIPGTGKT. 2 disordered regions span residues 814–837 and 860–892; these read TLLQ…DALD and FSND…KNER. 2 stretches are compositionally biased toward basic and acidic residues: residues 819–837 and 882–892; these read DKNE…DALD and NPNDKLDKNER. 975 to 982 is an ATP binding site; sequence GPPGCGKT.

This sequence belongs to the AAA ATPase family.

The protein is Putative cell division cycle ATPase of Plasmodium falciparum (isolate 3D7).